A 257-amino-acid polypeptide reads, in one-letter code: Glutamate racemase (257 aa).

Substrate is bound by residues 12-13 and 44-45; these read DS and YG. The Proton donor/acceptor role is filled by C75. 76–77 serves as a coordination point for substrate; that stretch reads NT. The active-site Proton donor/acceptor is the C185. 186 to 187 lines the substrate pocket; that stretch reads TH.

Belongs to the aspartate/glutamate racemases family.

It catalyses the reaction L-glutamate = D-glutamate. It functions in the pathway cell wall biogenesis; peptidoglycan biosynthesis. Functionally, provides the (R)-glutamate required for cell wall biosynthesis. The chain is Glutamate racemase from Clostridium botulinum (strain ATCC 19397 / Type A).